A 671-amino-acid chain; its full sequence is DNA ligase (671 aa).

NAD(+)-binding positions include 32-36 (DAEYD), 81-82 (SL), and Glu-113. Residue Lys-115 is the N6-AMP-lysine intermediate of the active site. Residues Arg-136, Glu-173, Lys-290, and Lys-314 each coordinate NAD(+). Residues Cys-408, Cys-411, Cys-426, and Cys-432 each contribute to the Zn(2+) site. A BRCT domain is found at 593 to 671 (EIDSPFAGKT…EAEMLRLLGS (79 aa)).

Belongs to the NAD-dependent DNA ligase family. LigA subfamily. It depends on Mg(2+) as a cofactor. The cofactor is Mn(2+).

The catalysed reaction is NAD(+) + (deoxyribonucleotide)n-3'-hydroxyl + 5'-phospho-(deoxyribonucleotide)m = (deoxyribonucleotide)n+m + AMP + beta-nicotinamide D-nucleotide.. Its function is as follows. DNA ligase that catalyzes the formation of phosphodiester linkages between 5'-phosphoryl and 3'-hydroxyl groups in double-stranded DNA using NAD as a coenzyme and as the energy source for the reaction. It is essential for DNA replication and repair of damaged DNA. The sequence is that of DNA ligase from Shigella flexneri serotype 5b (strain 8401).